Reading from the N-terminus, the 208-residue chain is Large ribosomal subunit protein uL4 (208 aa).

The span at 47 to 58 (ARAARERSDVAR) shows a compositional bias: basic and acidic residues. The tract at residues 47-84 (ARAARERSDVARTGKKFGRQKGGGTARHGDRRAPIFIG) is disordered.

Belongs to the universal ribosomal protein uL4 family. Part of the 50S ribosomal subunit.

Functionally, one of the primary rRNA binding proteins, this protein initially binds near the 5'-end of the 23S rRNA. It is important during the early stages of 50S assembly. It makes multiple contacts with different domains of the 23S rRNA in the assembled 50S subunit and ribosome. Forms part of the polypeptide exit tunnel. This is Large ribosomal subunit protein uL4 from Sphingopyxis alaskensis (strain DSM 13593 / LMG 18877 / RB2256) (Sphingomonas alaskensis).